Consider the following 130-residue polypeptide: Fluoride-specific ion channel FluC 2 (130 aa).

The next 4 membrane-spanning stretches (helical) occupy residues 4–24 (GLST…GAIC), 38–58 (NLWG…FFLA), 72–92 (LYLL…SLIL), and 103–123 (WMEL…FISL). Gly-82 and Ser-85 together coordinate Na(+).

This sequence belongs to the fluoride channel Fluc/FEX (TC 1.A.43) family.

It is found in the cell inner membrane. It catalyses the reaction fluoride(in) = fluoride(out). Na(+) is not transported, but it plays an essential structural role and its presence is essential for fluoride channel function. Fluoride-specific ion channel. Important for reducing fluoride concentration in the cell, thus reducing its toxicity. The chain is Fluoride-specific ion channel FluC 2 from Prochlorococcus marinus (strain SARG / CCMP1375 / SS120).